The following is an 88-amino-acid chain: uncharacterized protein (88 aa).

A disordered region spans residues 1–31 (MIPRDPRSPAPDLSAINQPAGRAERRSGPAT).

This is an uncharacterized protein from Escherichia coli.